Consider the following 1350-residue polypeptide: MRPGEESQLVPKEIENAADEPRVLCIVQDTTNCKSVNERITLNLPASTSVKQLYEDVSNKAGYVSSTFSLMWGNGASNTDMAALDPTPDRTLQEAGFEAGKKNFLHLTDKDGEQPQLTSDESGTADSSGLDDSSQEKFIGPLPREESVAGTSNYVSQNYSYSSLLSKSDTGYVGLVNQAMTCYLNSLLQTLFMTPEFRNALYKWEFEESEEDPVSSIPYQLQRLFVLLQTSKKRAIETTDVTRSFGWDSSEAWQQHDVQELCRVMFDALEQKWKQTEQADLINQLYQGKLKDYVKCLECGYESWRIDTFLDIPLVIRPYGSNTAFGSMEEALHAFIQPETLDGPNQYFCERCKRKCDARKGLKFLHFPYLLTLQLKRFDFDYTSMHRIKLNDRMTFPDELDMSPFIDMEDEKSPQTDSCTDSGAENEGSCHSDQMSNDFSTDDAVDEGICLETNSNIEKLNKSVAEKNSLYELFSVMVHSGSAAGGHYYACIKSFADGQWYSFNDQHVSRITQEDIKKTYGGATGNRGYYSSAFASSTNAYMLMYRLKNPARNAQFLEASEFPEHIKLLVQKEQEQEEQEKRQREIERNTCKLKLFCMHPVKQIMMESKLEVHKDKTMKEAVEIANKLMDLEGVIPLDCCRLVKYDEFHDYLERSYEDEEDRTMGYLLGGVKSSYMFDLLLETKRPDQVFQSYKPGEVMVKVYVVDLKTETVASPVSVRAYLSQTIIEFKQLISKSVDLPPDSMRVILERCYNDLRLLNVANKTLKAEGFFRSNKVFVESSDSLDHQLVFTDSHLWKLLDRHANTIKLYVSLPEHPRPTARSVGPKGGGDMNPQEDYCSRAKSVDAILEESTEKLKSLSLQQHQDGGNGDSSKSTEGSDFENIDSPLNEVDSSGSADNRELENRILPADPENNFQPEERSDSDVNNDRSTSSVDSDILSSSHSSDTLCNADGTPIPLANGLDSHSITSSRRSKANDGKKETWDTAEEDSGTDSEYDESGKSRGEAQYMYFKAEPHAGEGCLAEGSKCLLVNVDKRITLAAFKQQLESFVGVPSSQFKVFRVYASNQEFESVRLNETLSSFSDDNKITIRLGRALKKGEYRVKIFQLLVNEPEPCKFVLDAVFSKGMTVRQSKEELLPLLREQCGLDLSIDRFRLRKKTWKNPGTVFLDSHVYENESISSCWEVLLEALDETEKMKSMSQLSLFTKRWRPSELKLDPFKEVVLESNSVEELRDKICEISAIPLENLEFAKGRGTFPCDISVLEIHQDLDWNPKVSTLNAWPLYISDDGAVIFYRDKTEEVMELTDEQRNELVKKESSRLQKTGHRVTYSPRKEKALKIYLDGPTNKDSAQD.

The tract at residues 111–138 (DGEQPQLTSDESGTADSSGLDDSSQEKF) is disordered. Over residues 115 to 132 (PQLTSDESGTADSSGLDD) the composition is skewed to polar residues. A USP domain is found at 173 to 548 (VGLVNQAMTC…NAYMLMYRLK (376 aa)). Cys-182 (nucleophile) is an active-site residue. The interval 409-437 (EDEKSPQTDSCTDSGAENEGSCHSDQMSN) is disordered. Polar residues predominate over residues 415–437 (QTDSCTDSGAENEGSCHSDQMSN). His-487 functions as the Proton acceptor in the catalytic mechanism. Disordered stretches follow at residues 815 to 836 (HPRPTARSVGPKGGGDMNPQED) and 859 to 1000 (SLQQ…ESGK). The segment covering 859 to 877 (SLQQHQDGGNGDSSKSTEG) has biased composition (polar residues). Basic and acidic residues predominate over residues 916-926 (PEERSDSDVNN). The span at 929–945 (STSSVDSDILSSSHSSD) shows a compositional bias: low complexity. Positions 973–982 (KANDGKKETW) are enriched in basic and acidic residues. Acidic residues predominate over residues 983–996 (DTAEEDSGTDSEYD).

This sequence belongs to the peptidase C19 family. USP47 subfamily.

Its subcellular location is the cytoplasm. It carries out the reaction Thiol-dependent hydrolysis of ester, thioester, amide, peptide and isopeptide bonds formed by the C-terminal Gly of ubiquitin (a 76-residue protein attached to proteins as an intracellular targeting signal).. Functionally, ubiquitin-specific protease that specifically deubiquitinates monoubiquitinated DNA polymerase beta (polb), stabilizing polb thereby playing a role in base-excision repair (BER). This Xenopus laevis (African clawed frog) protein is Ubiquitin carboxyl-terminal hydrolase 47 (usp47).